A 979-amino-acid polypeptide reads, in one-letter code: Glycine dehydrogenase (decarboxylating) (979 aa).

Residue lysine 724 is modified to N6-(pyridoxal phosphate)lysine.

Belongs to the GcvP family. In terms of assembly, the glycine cleavage system is composed of four proteins: P, T, L and H. Pyridoxal 5'-phosphate is required as a cofactor.

It catalyses the reaction N(6)-[(R)-lipoyl]-L-lysyl-[glycine-cleavage complex H protein] + glycine + H(+) = N(6)-[(R)-S(8)-aminomethyldihydrolipoyl]-L-lysyl-[glycine-cleavage complex H protein] + CO2. Functionally, the glycine cleavage system catalyzes the degradation of glycine. The P protein binds the alpha-amino group of glycine through its pyridoxal phosphate cofactor; CO(2) is released and the remaining methylamine moiety is then transferred to the lipoamide cofactor of the H protein. The polypeptide is Glycine dehydrogenase (decarboxylating) (Nostoc punctiforme (strain ATCC 29133 / PCC 73102)).